The primary structure comprises 145 residues: NADH dehydrogenase [ubiquinone] 1 alpha subcomplex subunit 12 (145 aa).

M1 carries the N-acetylmethionine modification.

The protein belongs to the complex I NDUFA12 subunit family. As to quaternary structure, complex I is composed of 45 different subunits.

Its subcellular location is the mitochondrion inner membrane. In terms of biological role, accessory subunit of the mitochondrial membrane respiratory chain NADH dehydrogenase (Complex I), that is believed not to be involved in catalysis. Complex I functions in the transfer of electrons from NADH to the respiratory chain. The immediate electron acceptor for the enzyme is believed to be ubiquinone. This Mus musculus (Mouse) protein is NADH dehydrogenase [ubiquinone] 1 alpha subcomplex subunit 12 (Ndufa12).